The primary structure comprises 331 residues: tRNA-cytidine(32) 2-sulfurtransferase (331 aa).

The short motif at Ser73–Ser78 is the PP-loop motif element. Residues Cys148, Cys151, and Cys239 each contribute to the [4Fe-4S] cluster site.

It belongs to the TtcA family. In terms of assembly, homodimer. Mg(2+) serves as cofactor. The cofactor is [4Fe-4S] cluster.

The protein resides in the cytoplasm. It catalyses the reaction cytidine(32) in tRNA + S-sulfanyl-L-cysteinyl-[cysteine desulfurase] + AH2 + ATP = 2-thiocytidine(32) in tRNA + L-cysteinyl-[cysteine desulfurase] + A + AMP + diphosphate + H(+). It functions in the pathway tRNA modification. Its function is as follows. Catalyzes the ATP-dependent 2-thiolation of cytidine in position 32 of tRNA, to form 2-thiocytidine (s(2)C32). The sulfur atoms are provided by the cysteine/cysteine desulfurase (IscS) system. The chain is tRNA-cytidine(32) 2-sulfurtransferase from Burkholderia mallei (strain NCTC 10247).